Consider the following 209-residue polypeptide: Chloramphenicol acetyltransferase (209 aa).

His189 functions as the Proton acceptor in the catalytic mechanism.

Belongs to the chloramphenicol acetyltransferase family. As to quaternary structure, homotrimer.

The enzyme catalyses chloramphenicol + acetyl-CoA = chloramphenicol 3-acetate + CoA. This enzyme is an effector of chloramphenicol resistance in bacteria. The sequence is that of Chloramphenicol acetyltransferase from Staphylococcus aureus.